We begin with the raw amino-acid sequence, 113 residues long: Large ribosomal subunit protein uL22 (113 aa).

The protein belongs to the universal ribosomal protein uL22 family. As to quaternary structure, part of the 50S ribosomal subunit.

Functionally, this protein binds specifically to 23S rRNA; its binding is stimulated by other ribosomal proteins, e.g. L4, L17, and L20. It is important during the early stages of 50S assembly. It makes multiple contacts with different domains of the 23S rRNA in the assembled 50S subunit and ribosome. In terms of biological role, the globular domain of the protein is located near the polypeptide exit tunnel on the outside of the subunit, while an extended beta-hairpin is found that lines the wall of the exit tunnel in the center of the 70S ribosome. The chain is Large ribosomal subunit protein uL22 from Roseiflexus sp. (strain RS-1).